The primary structure comprises 851 residues: Protein NUD1 (851 aa).

Disordered stretches follow at residues 1 to 31 (MDMD…NAHS) and 216 to 352 (LVGS…KAPS). The segment covering 8–21 (AELSSQLENLTINS) has biased composition (polar residues). 2 stretches are compositionally biased toward low complexity: residues 223-246 (NSNN…INNK) and 260-278 (SNSF…QTQS). A compositionally biased stretch (polar residues) spans 291-304 (NTISPGQLGYQFNH). The span at 320-333 (SSSHSLDNTSSNQS) shows a compositional bias: low complexity. Lysine 357 is covalently cross-linked (Glycyl lysine isopeptide (Lys-Gly) (interchain with G-Cter in ubiquitin)). Residues threonine 388 and threonine 392 each carry the phosphothreonine modification. Phosphoserine occurs at positions 417 and 419. LRR repeat units follow at residues 544-566 (DLEC…SLCH), 567-588 (HLQE…GSSR), 589-609 (MKKL…EQLI), 621-642 (TVEV…NCLP), and 643-664 (RLKV…SKME).

As to quaternary structure, interacts directly with MPC54, CNM67, SPO21/MPC70, ADY3 and ADY4. Probable component of a spindle pole boby (SPB) complex composed of ADY3, SSP1, DON1, MPC54, SPO21/MPC70, NUD1 and CNM67. In terms of processing, phosphorylated from S/G2 phase until the end of mitosis.

The protein resides in the cytoplasm. It localises to the cytoskeleton. It is found in the microtubule organizing center. Its subcellular location is the spindle pole body. The protein localises to the nucleus envelope. Involved in astral microtubule organization by binding SCP72 to the outer plaque in a cell-cycle dependent manner. Required for the mitotic exit by facilitating the binding of TEMP1 to CDC15. Also involved in the pathway that organizes the shaping and sizing of the prospore membrane (PSM) during sporulation. The sequence is that of Protein NUD1 (NUD1) from Saccharomyces cerevisiae (strain ATCC 204508 / S288c) (Baker's yeast).